The following is a 351-amino-acid chain: Biotin synthase (351 aa).

Positions 48–265 (NKVRIHILDN…LCMFRLINPD (218 aa)) constitute a Radical SAM core domain. Residues C63, C67, and C70 each contribute to the [4Fe-4S] cluster site. 4 residues coordinate [2Fe-2S] cluster: C107, C139, C199, and R269.

It belongs to the radical SAM superfamily. Biotin synthase family. In terms of assembly, homodimer. [4Fe-4S] cluster serves as cofactor. The cofactor is [2Fe-2S] cluster.

The catalysed reaction is (4R,5S)-dethiobiotin + (sulfur carrier)-SH + 2 reduced [2Fe-2S]-[ferredoxin] + 2 S-adenosyl-L-methionine = (sulfur carrier)-H + biotin + 2 5'-deoxyadenosine + 2 L-methionine + 2 oxidized [2Fe-2S]-[ferredoxin]. Its pathway is cofactor biosynthesis; biotin biosynthesis; biotin from 7,8-diaminononanoate: step 2/2. In terms of biological role, catalyzes the conversion of dethiobiotin (DTB) to biotin by the insertion of a sulfur atom into dethiobiotin via a radical-based mechanism. The chain is Biotin synthase from Leptospira interrogans serogroup Icterohaemorrhagiae serovar Lai (strain 56601).